The primary structure comprises 534 residues: CTP synthase (534 aa).

Residues 1–268 are amidoligase domain; that stretch reads MAAKYIFVTG…DQIVCDHLQL (268 aa). Position 14 (S14) interacts with CTP. UTP is bound at residue S14. 15–20 is an ATP binding site; that stretch reads SLGKGI. Y55 contacts L-glutamine. Position 72 (D72) interacts with ATP. Positions 72 and 142 each coordinate Mg(2+). Residues 149 to 151, 189 to 194, and K225 contribute to the CTP site; these read DIE and KSKPTQ. UTP contacts are provided by residues 189–194 and K225; that span reads KSKPTQ. The Glutamine amidotransferase type-1 domain occupies 293–534; that stretch reads RIAIVGKYVE…FVRNALAAQA (242 aa). G355 provides a ligand contact to L-glutamine. C382 acts as the Nucleophile; for glutamine hydrolysis in catalysis. L-glutamine contacts are provided by residues 383-386, E406, and R463; that span reads LGMQ. Catalysis depends on residues H508 and E510.

Belongs to the CTP synthase family. In terms of assembly, homotetramer.

The enzyme catalyses UTP + L-glutamine + ATP + H2O = CTP + L-glutamate + ADP + phosphate + 2 H(+). It catalyses the reaction L-glutamine + H2O = L-glutamate + NH4(+). It carries out the reaction UTP + NH4(+) + ATP = CTP + ADP + phosphate + 2 H(+). The protein operates within pyrimidine metabolism; CTP biosynthesis via de novo pathway; CTP from UDP: step 2/2. Its activity is regulated as follows. Allosterically activated by GTP, when glutamine is the substrate; GTP has no effect on the reaction when ammonia is the substrate. The allosteric effector GTP functions by stabilizing the protein conformation that binds the tetrahedral intermediate(s) formed during glutamine hydrolysis. Inhibited by the product CTP, via allosteric rather than competitive inhibition. Its function is as follows. Catalyzes the ATP-dependent amination of UTP to CTP with either L-glutamine or ammonia as the source of nitrogen. Regulates intracellular CTP levels through interactions with the four ribonucleotide triphosphates. This is CTP synthase from Shouchella clausii (strain KSM-K16) (Alkalihalobacillus clausii).